Consider the following 368-residue polypeptide: Phospho-N-acetylmuramoyl-pentapeptide-transferase (368 aa).

10 consecutive transmembrane segments (helical) span residues 34 to 54, 79 to 99, 102 to 122, 140 to 160, 176 to 196, 207 to 227, 247 to 267, 271 to 291, 296 to 316, and 345 to 365; these read GAVV…IDHL, TPTM…VLWA, LNPY…VGFY, ARLL…VRLG, LVIK…VGAG, GLAI…AYLA, LAVL…FNAP, IFMG…IAVA, IVLA…IVQV, and QIVI…LSTL.

This sequence belongs to the glycosyltransferase 4 family. MraY subfamily. It depends on Mg(2+) as a cofactor.

The protein localises to the cell inner membrane. The catalysed reaction is UDP-N-acetyl-alpha-D-muramoyl-L-alanyl-gamma-D-glutamyl-meso-2,6-diaminopimeloyl-D-alanyl-D-alanine + di-trans,octa-cis-undecaprenyl phosphate = di-trans,octa-cis-undecaprenyl diphospho-N-acetyl-alpha-D-muramoyl-L-alanyl-D-glutamyl-meso-2,6-diaminopimeloyl-D-alanyl-D-alanine + UMP. Its pathway is cell wall biogenesis; peptidoglycan biosynthesis. Functionally, catalyzes the initial step of the lipid cycle reactions in the biosynthesis of the cell wall peptidoglycan: transfers peptidoglycan precursor phospho-MurNAc-pentapeptide from UDP-MurNAc-pentapeptide onto the lipid carrier undecaprenyl phosphate, yielding undecaprenyl-pyrophosphoryl-MurNAc-pentapeptide, known as lipid I. The sequence is that of Phospho-N-acetylmuramoyl-pentapeptide-transferase from Bradyrhizobium sp. (strain ORS 278).